The chain runs to 214 residues: MADS-box protein SOC1 (214 aa).

The region spanning 3–57 (RGKTQMKRIENATSRQVTFSKRRNGLLKKAFELSVLCDAEVSLIIFSPKGKLYEF) is the MADS-box domain. Residues 87–177 (MQHLKYEAAN…SEKWGSHESE (91 aa)) form the K-box domain. Residues 162 to 177 (AENEKLSEKWGSHESE) show a composition bias toward basic and acidic residues. The interval 162 to 214 (AENEKLSEKWGSHESEVWSNKNQESTGRGDEESSPSSEVETQLFIGLPCSSRK) is disordered. The span at 178–187 (VWSNKNQEST) shows a compositional bias: polar residues.

As to quaternary structure, forms a heterodimer with AGL24 through MADS-box domain. Interacts with AGL15, AGL16 and AGL19. Interacts with OXS3 in the nucleus. As to expression, widely expressed. Not found in the apical meristem of short-day grown plants in vegetative stage.

It is found in the nucleus. Its subcellular location is the cytoplasm. Its function is as follows. Transcription activator active in flowering time control. May integrate signals from the photoperiod, vernalization and autonomous floral induction pathways. Can modulate class B and C homeotic genes expression. When associated with AGL24, mediates effect of gibberellins on flowering under short-day conditions, and regulates the expression of LEAFY (LFY), which links floral induction and floral development. The sequence is that of MADS-box protein SOC1 from Arabidopsis thaliana (Mouse-ear cress).